A 463-amino-acid chain; its full sequence is Asparagine--tRNA ligase (463 aa).

This sequence belongs to the class-II aminoacyl-tRNA synthetase family. In terms of assembly, homodimer.

It is found in the cytoplasm. The catalysed reaction is tRNA(Asn) + L-asparagine + ATP = L-asparaginyl-tRNA(Asn) + AMP + diphosphate + H(+). This chain is Asparagine--tRNA ligase, found in Clostridium kluyveri (strain ATCC 8527 / DSM 555 / NBRC 12016 / NCIMB 10680 / K1).